The following is a 196-amino-acid chain: MPGMFFSANPKDLKGTDQSLLDDKTQKRRPKTFGMDVKAYLRSMIPHLESGMKSSKSKDILSADEVMQWSQSLEKLLANQTGQDVFGNFLKSEFSEENIEFWLACEDYKKTESDLLRCKAEKIYKAFVHSDAAKQINIDFHTRESTAKKIKAPTLTCFDEAQKVIYTLMEKDSYPRFLKSNIYLNLLNDLQANSLK.

Positions 1 to 27 (MPGMFFSANPKDLKGTDQSLLDDKTQK) are disordered. Residues 11–25 (KDLKGTDQSLLDDKT) are compositionally biased toward basic and acidic residues. Positions 72–187 (SLEKLLANQT…LKSNIYLNLL (116 aa)) constitute an RGS domain.

In terms of assembly, interacts with GNAI1 and GNAQ.

It is found in the cell membrane. Its subcellular location is the cytoplasm. The protein localises to the cytosol. Functionally, regulates G protein-coupled receptor signaling cascades, including signaling downstream of the N-formylpeptide chemoattractant receptors and leukotriene receptors. Inhibits B cell chemotaxis toward CXCL12. Inhibits signal transduction by increasing the GTPase activity of G protein alpha subunits, thereby driving them into their inactive GDP-bound form. This Equus caballus (Horse) protein is Regulator of G-protein signaling 1 (RGS1).